A 353-amino-acid polypeptide reads, in one-letter code: MIDADRLITAAGGRDRDEQMDRAIRPLSLADYIGQPTVREQMELFIQAARGRNEALDHTLIFGPPGLGKTTLANIIAQEMGVSIKSTSGPVLERPGDLAAILTNLEPNDVLFIDEIHRLSPIVEEVLYPAMEDFQLDIMIGEGPAARSIKLDLPPFTLVGATTRAGMLTNPLRDRFGIVQRLEFYNIADLSTIVSRSAGILGLVIEPQGAFEIARRARGTPRIANRLLRRVRDFAEVRGNGQITRQTADKALNLLDVDEHGFDHQDRRLLLTMIEKFDGGPVGVDSLAAAISEERHTIEDVLEPYLIQQGYIMRTPRGRVVTRHAYLHFGLNIPSRMGEMPVVDDVVDDPADL.

The tract at residues 4 to 185 (ADRLITAAGG…FGIVQRLEFY (182 aa)) is large ATPase domain (RuvB-L). Residues Ile-24, Arg-25, Gly-66, Lys-69, Thr-70, Thr-71, 132-134 (EDF), Arg-175, Tyr-185, and Arg-222 each bind ATP. Thr-70 lines the Mg(2+) pocket. Residues 186–256 (NIADLSTIVS…TADKALNLLD (71 aa)) form a small ATPAse domain (RuvB-S) region. The segment at 259–353 (EHGFDHQDRR…DDVVDDPADL (95 aa)) is head domain (RuvB-H). 3 residues coordinate DNA: Arg-295, Arg-314, and Arg-319.

Belongs to the RuvB family. Homohexamer. Forms an RuvA(8)-RuvB(12)-Holliday junction (HJ) complex. HJ DNA is sandwiched between 2 RuvA tetramers; dsDNA enters through RuvA and exits via RuvB. An RuvB hexamer assembles on each DNA strand where it exits the tetramer. Each RuvB hexamer is contacted by two RuvA subunits (via domain III) on 2 adjacent RuvB subunits; this complex drives branch migration. In the full resolvosome a probable DNA-RuvA(4)-RuvB(12)-RuvC(2) complex forms which resolves the HJ.

It localises to the cytoplasm. The catalysed reaction is ATP + H2O = ADP + phosphate + H(+). Functionally, the RuvA-RuvB-RuvC complex processes Holliday junction (HJ) DNA during genetic recombination and DNA repair, while the RuvA-RuvB complex plays an important role in the rescue of blocked DNA replication forks via replication fork reversal (RFR). RuvA specifically binds to HJ cruciform DNA, conferring on it an open structure. The RuvB hexamer acts as an ATP-dependent pump, pulling dsDNA into and through the RuvAB complex. RuvB forms 2 homohexamers on either side of HJ DNA bound by 1 or 2 RuvA tetramers; 4 subunits per hexamer contact DNA at a time. Coordinated motions by a converter formed by DNA-disengaged RuvB subunits stimulates ATP hydrolysis and nucleotide exchange. Immobilization of the converter enables RuvB to convert the ATP-contained energy into a lever motion, pulling 2 nucleotides of DNA out of the RuvA tetramer per ATP hydrolyzed, thus driving DNA branch migration. The RuvB motors rotate together with the DNA substrate, which together with the progressing nucleotide cycle form the mechanistic basis for DNA recombination by continuous HJ branch migration. Branch migration allows RuvC to scan DNA until it finds its consensus sequence, where it cleaves and resolves cruciform DNA. This chain is Holliday junction branch migration complex subunit RuvB, found in Pseudomonas savastanoi pv. phaseolicola (strain 1448A / Race 6) (Pseudomonas syringae pv. phaseolicola (strain 1448A / Race 6)).